Here is a 66-residue protein sequence, read N- to C-terminus: Large ribosomal subunit protein bL28 (66 aa).

Residues 1 to 26 (MAKDAITGARTRFGNQRSHALNSSRR) form a disordered region. The span at 13–25 (FGNQRSHALNSSR) shows a compositional bias: polar residues.

The protein belongs to the bacterial ribosomal protein bL28 family.

The polypeptide is Large ribosomal subunit protein bL28 (Leuconostoc citreum (strain KM20)).